The following is a 233-amino-acid chain: MNAQELKKVAAAKALEFVQDGMRLGIGSGSTANEFIRLLGERVANGLHVIGVATSHYSEQLCRQVGVPVTTLEQIPELDLDIDGADEIGPNMTLIKGGGGALLREKIVAAASHEMLIIADETKVVKTLGAFALPIAVNQFGLSVTRSAIEKMAKGLGLSGKVTLRMNGDNPFKTDDGHFIFDASWGHIVQPKLLSNALFEIPGVIEHGLFVGLASRSIIAMADGQIKILEKKC.

Substrate-binding positions include 28–31 (SGST), 83–86 (DGAD), and 96–99 (KGGG). Residue E105 is the Proton acceptor of the active site. K123 serves as a coordination point for substrate.

The protein belongs to the ribose 5-phosphate isomerase family. In terms of assembly, homodimer.

The catalysed reaction is aldehydo-D-ribose 5-phosphate = D-ribulose 5-phosphate. It participates in carbohydrate degradation; pentose phosphate pathway; D-ribose 5-phosphate from D-ribulose 5-phosphate (non-oxidative stage): step 1/1. Its function is as follows. Catalyzes the reversible conversion of ribose-5-phosphate to ribulose 5-phosphate. The protein is Ribose-5-phosphate isomerase A of Bartonella bacilliformis (strain ATCC 35685 / KC583 / Herrer 020/F12,63).